Consider the following 356-residue polypeptide: Chorismate synthase (356 aa).

Positions 48 and 54 each coordinate NADP(+). Residues 125–127, 237–238, G282, 297–301, and R323 contribute to the FMN site; these read RSS, NA, and KPTSS.

The protein belongs to the chorismate synthase family. As to quaternary structure, homotetramer. The cofactor is FMNH2.

It carries out the reaction 5-O-(1-carboxyvinyl)-3-phosphoshikimate = chorismate + phosphate. It functions in the pathway metabolic intermediate biosynthesis; chorismate biosynthesis; chorismate from D-erythrose 4-phosphate and phosphoenolpyruvate: step 7/7. Catalyzes the anti-1,4-elimination of the C-3 phosphate and the C-6 proR hydrogen from 5-enolpyruvylshikimate-3-phosphate (EPSP) to yield chorismate, which is the branch point compound that serves as the starting substrate for the three terminal pathways of aromatic amino acid biosynthesis. This reaction introduces a second double bond into the aromatic ring system. The sequence is that of Chorismate synthase from Rhizorhabdus wittichii (strain DSM 6014 / CCUG 31198 / JCM 15750 / NBRC 105917 / EY 4224 / RW1) (Sphingomonas wittichii).